The primary structure comprises 480 residues: Glycogen synthase 1 (480 aa).

Lysine 15 is a binding site for ADP-alpha-D-glucose.

This sequence belongs to the glycosyltransferase 1 family. Bacterial/plant glycogen synthase subfamily.

The catalysed reaction is [(1-&gt;4)-alpha-D-glucosyl](n) + ADP-alpha-D-glucose = [(1-&gt;4)-alpha-D-glucosyl](n+1) + ADP + H(+). It participates in glycan biosynthesis; glycogen biosynthesis. In terms of biological role, synthesizes alpha-1,4-glucan chains using ADP-glucose. This is Glycogen synthase 1 (glgA1) from Rhizobium meliloti (strain 1021) (Ensifer meliloti).